The primary structure comprises 495 residues: UPF0371 protein cgR_2887 (495 aa).

Belongs to the UPF0371 family.

This is UPF0371 protein cgR_2887 from Corynebacterium glutamicum (strain R).